The primary structure comprises 454 residues: Signal recognition particle protein (454 aa).

Residues 102-109 (GLQGTGKT), 184-188 (DTAGR), and 242-245 (TKMD) contribute to the GTP site.

It belongs to the GTP-binding SRP family. SRP54 subfamily. Part of the signal recognition particle protein translocation system, which is composed of SRP and FtsY.

Its subcellular location is the cytoplasm. The enzyme catalyses GTP + H2O = GDP + phosphate + H(+). Functionally, involved in targeting and insertion of nascent membrane proteins into the cytoplasmic membrane. Binds to the hydrophobic signal sequence of the ribosome-nascent chain (RNC) as it emerges from the ribosomes. The SRP-RNC complex is then targeted to the cytoplasmic membrane where it interacts with the SRP receptor FtsY. This chain is Signal recognition particle protein, found in Aquifex aeolicus (strain VF5).